The primary structure comprises 130 residues: Small ribosomal subunit protein uS11c (130 aa).

Belongs to the universal ribosomal protein uS11 family. In terms of assembly, part of the 30S ribosomal subunit.

It localises to the plastid. The protein localises to the chloroplast. This chain is Small ribosomal subunit protein uS11c, found in Psilotum nudum (Whisk fern).